A 378-amino-acid polypeptide reads, in one-letter code: MDLAGLLKSQFLCHLVFCYVFIASGLIINTVQLFTLLLWPINKQLFRKINCRLSYCISSQLVMLLEWWSGTECTIFTDPRAYPKYGKENAIVVLNHKFEIDFLCGWSLSERFGLLGGSKVLAKKELAYVPIIGWMWYFTEMVFCSRKWEQDRKTVATSLQHLRDYPEKYFFLIHCEGTRFTEKKHEISMQVARAKGLPRLKHHPLPRTKGFAITVRSLRNVVSAVYDCTLNFRNNENPTLLGVLNGKKYHADLYVRRIPLEDIPEDDDRCSAWLHKLYQEKDAFQEEYYRTGTFPETPMVPPRRPWTLVNWLFWASLVLYPFFQFLVSMIRSGSSLTLASFILVFFVASMGVRWMIGVTEIDKGSAYGNSDSKQKQND.

Residues 11–31 (FLCHLVFCYVFIASGLIINTV) form a helical membrane-spanning segment. Positions 96-101 (HKFEID) match the HXXXXD motif motif. 3 helical membrane passes run 125 to 145 (ELAY…VFCS), 307 to 327 (TLVN…QFLV), and 338 to 358 (LASF…MIGV).

The protein belongs to the 1-acyl-sn-glycerol-3-phosphate acyltransferase family.

The protein resides in the endoplasmic reticulum membrane. The catalysed reaction is a 1-acyl-sn-glycero-3-phosphate + an acyl-CoA = a 1,2-diacyl-sn-glycero-3-phosphate + CoA. The enzyme catalyses (4Z,7Z,10Z,13Z,16Z,19Z)-docosahexaenoyl-CoA + 1-hexadecanoyl-sn-glycero-3-phosphate = 1-hexadecanoyl-2-(4Z,7Z,10Z,13Z,16Z,19Z-docosahexaenoyl)-sn-glycero-3-phosphate + CoA. It carries out the reaction 1-octadecanoyl-sn-glycero-3-phosphate + (9Z,12Z)-octadecadienoyl-CoA = 1-octadecanoyl-2-(9Z,12Z-octadecadienoyl)-sn-glycero-3-phosphate + CoA. It catalyses the reaction 1-octadecanoyl-sn-glycero-3-phosphate + (4Z,7Z,10Z,13Z,16Z,19Z)-docosahexaenoyl-CoA = 1-octadecanoyl-2-(4Z,7Z,10Z,13Z,16Z,19Z-docosahexaenoyl)-sn-glycero-3-phosphate + CoA. The catalysed reaction is (4Z,7Z,10Z,13Z,16Z,19Z)-docosahexaenoyl-CoA + 1-(9Z-octadecenoyl)-sn-glycero-3-phosphate = 1-(9Z-octadecenoyl)-2-(4Z,7Z,10Z,13Z,16Z,19Z-docosahexaenoyl)-sn-glycero-3-phosphate + CoA. The protein operates within phospholipid metabolism; CDP-diacylglycerol biosynthesis; CDP-diacylglycerol from sn-glycerol 3-phosphate: step 2/3. Its function is as follows. Converts 1-acyl-sn-glycerol-3-phosphate (lysophosphatidic acid or LPA) into 1,2-diacyl-sn-glycerol-3-phosphate (phosphatidic acid or PA) by incorporating an acyl moiety at the sn-2 position of the glycerol backbone. Exhibits high acyl-CoA specificity for polyunsaturated fatty acyl-CoA, especially docosahexaenoyl-CoA (22:6-CoA, DHA-CoA). The polypeptide is 1-acyl-sn-glycerol-3-phosphate acyltransferase delta (AGPAT4) (Macaca fascicularis (Crab-eating macaque)).